We begin with the raw amino-acid sequence, 604 residues long: MLLKELSSLASPLSQPQVEKLKQLTAELNAVQLAWVSGYLAATANASGNLAQLAPVSDAQAAQTVTILYGSQTGNGRGIAKALAEKAKAQGYSVNLASMGEYNVRQLKQETLLLLVVSTHGEGEAPDDAIELHKFLASKRAPQLNNLHYSVLALGDSSYEFFCQTGKDFDARLSALGAKALLPLVECDVDYEAAAGQWHADVLSAVKPLIQTTANVVALNDTSSALAASESEFTKQNPYSAEVLVSQKITGRGSDRDVRHVEIDLGESGLRYEVGDALGVWFSNNETLVDEILAGLGLAADTKVTVANESISLKQALIEKKELTQLYPGLVKAWAELSASPELLALSEDKEQVRQFILHHQFADLVANYQLKADANLDANKLVELLRPLTPRLYSIASSQSEVDTEVHLTVALVEDEHQGQARFGGASHFLASAEEGAEVKVYVEPNKHFRLPEDPQTPVIMIGPGTGVAPFRAFMQERVAQGAEGDSWLFFGNPHFEQDFLYQTEWQQYLKNGDLTRIDVAFSRDQAHKIYVQHRIKEQGQTLWQWLQNGAHLYICGDAERMAKDVHQALLGVAVEFGGLSSEAAEEYFETLRSHKRYQKDVY.

Residues 65-203 form the Flavodoxin-like domain; that stretch reads VTILYGSQTG…AAGQWHADVL (139 aa). FMN contacts are provided by residues 71–76, 118–121, and 154–163; these read SQTGNG, STHG, and LGDSSYEFFC. Positions 236-453 constitute an FAD-binding FR-type domain; it reads QNPYSAEVLV…VEPNKHFRLP (218 aa). Residues T324, L358, 392-395, 410-412, and 425-428 each bind FAD; these read RLYS, TVA, and GGAS. Residues 524–525, 530–534, and D566 each bind NADP(+); these read SR and KIYVQ. Position 604 (Y604) interacts with FAD.

The protein belongs to the NADPH-dependent sulphite reductase flavoprotein subunit CysJ family. This sequence in the N-terminal section; belongs to the flavodoxin family. It in the C-terminal section; belongs to the flavoprotein pyridine nucleotide cytochrome reductase family. As to quaternary structure, alpha(8)-beta(8). The alpha component is a flavoprotein, the beta component is a hemoprotein. It depends on FAD as a cofactor. The cofactor is FMN.

It catalyses the reaction hydrogen sulfide + 3 NADP(+) + 3 H2O = sulfite + 3 NADPH + 4 H(+). It functions in the pathway sulfur metabolism; hydrogen sulfide biosynthesis; hydrogen sulfide from sulfite (NADPH route): step 1/1. Functionally, component of the sulfite reductase complex that catalyzes the 6-electron reduction of sulfite to sulfide. This is one of several activities required for the biosynthesis of L-cysteine from sulfate. The flavoprotein component catalyzes the electron flow from NADPH -&gt; FAD -&gt; FMN to the hemoprotein component. The polypeptide is Sulfite reductase [NADPH] flavoprotein alpha-component (Shewanella sp. (strain MR-4)).